Here is a 277-residue protein sequence, read N- to C-terminus: Mannosyl-3-phosphoglycerate phosphatase (277 aa).

Residue aspartate 13 is the Nucleophile of the active site. Positions 13, 15, and 219 each coordinate Mg(2+).

It belongs to the HAD-like hydrolase superfamily. MPGP family. Requires Mg(2+) as cofactor.

It localises to the cytoplasm. It carries out the reaction 2-O-(alpha-D-mannosyl)-3-phosphoglycerate + H2O = (2R)-2-O-(alpha-D-mannosyl)-glycerate + phosphate. Its pathway is carbohydrate biosynthesis; 2-(alpha-D-mannosyl)-D-glycerate biosynthesis; 2-(alpha-D-mannosyl)-D-glycerate from GDP-alpha-D-mannose (MPG route): step 2/2. Hydrolyzes mannosyl-3-phosphoglycerate (MPG) to form the osmolyte mannosylglycerate (MG). This Aeropyrum pernix (strain ATCC 700893 / DSM 11879 / JCM 9820 / NBRC 100138 / K1) protein is Mannosyl-3-phosphoglycerate phosphatase.